A 373-amino-acid chain; its full sequence is Cobalt-precorrin-5B C(1)-methyltransferase (373 aa).

This sequence belongs to the CbiD family.

It carries out the reaction Co-precorrin-5B + S-adenosyl-L-methionine = Co-precorrin-6A + S-adenosyl-L-homocysteine. It participates in cofactor biosynthesis; adenosylcobalamin biosynthesis; cob(II)yrinate a,c-diamide from sirohydrochlorin (anaerobic route): step 6/10. Catalyzes the methylation of C-1 in cobalt-precorrin-5B to form cobalt-precorrin-6A. In Listeria monocytogenes serotype 4a (strain HCC23), this protein is Cobalt-precorrin-5B C(1)-methyltransferase.